The sequence spans 78 residues: Large ribosomal subunit protein bL28 (78 aa).

It belongs to the bacterial ribosomal protein bL28 family.

This chain is Large ribosomal subunit protein bL28, found in Trichodesmium erythraeum (strain IMS101).